Consider the following 200-residue polypeptide: Glycerol-3-phosphate acyltransferase (200 aa).

5 consecutive transmembrane segments (helical) span residues 3-23 (YIYSIFIGYFFGAIPFSFFIA), 50-70 (FYGALAFFFDIFKAYIAVFLV), 75-95 (IKFMLIAGTMAVLGHCYSIFL), 109-129 (VFLAVYPWSGLVFFGVWLFIV), and 134-154 (YVSLASMIGLIFASIFVFFAG).

The protein belongs to the PlsY family. Probably interacts with PlsX.

The protein resides in the cell inner membrane. It carries out the reaction an acyl phosphate + sn-glycerol 3-phosphate = a 1-acyl-sn-glycero-3-phosphate + phosphate. The protein operates within lipid metabolism; phospholipid metabolism. In terms of biological role, catalyzes the transfer of an acyl group from acyl-phosphate (acyl-PO(4)) to glycerol-3-phosphate (G3P) to form lysophosphatidic acid (LPA). This enzyme utilizes acyl-phosphate as fatty acyl donor, but not acyl-CoA or acyl-ACP. This Thermosipho melanesiensis (strain DSM 12029 / CIP 104789 / BI429) protein is Glycerol-3-phosphate acyltransferase.